Here is a 126-residue protein sequence, read N- to C-terminus: Protein ApaG (126 aa).

The ApaG domain maps to 2–126; sequence SQVESPIKIK…FRLAVPGIFQ (125 aa).

The polypeptide is Protein ApaG (Shewanella frigidimarina (strain NCIMB 400)).